We begin with the raw amino-acid sequence, 215 residues long: N-(5'-phosphoribosyl)anthranilate isomerase (215 aa).

This sequence belongs to the TrpF family.

The catalysed reaction is N-(5-phospho-beta-D-ribosyl)anthranilate = 1-(2-carboxyphenylamino)-1-deoxy-D-ribulose 5-phosphate. It participates in amino-acid biosynthesis; L-tryptophan biosynthesis; L-tryptophan from chorismate: step 3/5. The chain is N-(5'-phosphoribosyl)anthranilate isomerase from Rhizobium meliloti (strain 1021) (Ensifer meliloti).